A 144-amino-acid chain; its full sequence is Granulocyte-macrophage colony-stimulating factor (144 aa).

The N-terminal stretch at 1 to 17 (MWLQSLLLLGTVACSIS) is a signal peptide. Residues Ser-22, Ser-24, and Ser-26 are each glycosylated (O-linked (GalNAc...) serine). A glycan (O-linked (GalNAc...) threonine; partial) is linked at Thr-27. 2 N-linked (GlcNAc...) asparagine glycosylation sites follow: Asn-44 and Asn-54. 2 disulfide bridges follow: Cys-71–Cys-113 and Cys-105–Cys-138.

This sequence belongs to the GM-CSF family. As to quaternary structure, monomer. The signaling GM-CSF receptor complex is a dodecamer of two head-to-head hexamers of two alpha, two beta, and two ligand subunits.

Its subcellular location is the secreted. Functionally, cytokine that stimulates the growth and differentiation of hematopoietic precursor cells from various lineages, including granulocytes, macrophages, eosinophils and erythrocytes. The chain is Granulocyte-macrophage colony-stimulating factor (CSF2) from Homo sapiens (Human).